A 301-amino-acid polypeptide reads, in one-letter code: Probable serine acetyltransferase 3 (301 aa).

The segment at Ile280 to Asp301 is disordered.

The protein belongs to the transferase hexapeptide repeat family. As to quaternary structure, homomultimer.

It catalyses the reaction L-serine + acetyl-CoA = O-acetyl-L-serine + CoA. Its pathway is amino-acid biosynthesis; L-cysteine biosynthesis; L-cysteine from L-serine: step 1/2. The sequence is that of Probable serine acetyltransferase 3 (SAT3) from Oryza sativa subsp. japonica (Rice).